We begin with the raw amino-acid sequence, 757 residues long: Protein Lines homolog 1 (757 aa).

Ser-635 carries the phosphoserine modification.

Belongs to the protein lines family. In terms of tissue distribution, expressed in adult testis, prostate, prostate, spleen, thymus, skeletal muscle, fetal kidney and brain.

This chain is Protein Lines homolog 1, found in Homo sapiens (Human).